We begin with the raw amino-acid sequence, 320 residues long: RNA-binding protein Musashi homolog 1 (320 aa).

Residues 1-14 show a composition bias toward low complexity; the sequence is MTTTVSTGATAVAT. Positions 1–48 are disordered; the sequence is MTTTVSTGATAVATLRETSPPVDGHEEARLNADSDDGSHGSQDPGKMF. The residue at position 18 (threonine 18) is a Phosphothreonine. 2 positions are modified to phosphoserine: serine 19 and serine 34. Residues 23 to 38 show a composition bias toward basic and acidic residues; that stretch reads DGHEEARLNADSDDGS. RRM domains follow at residues 45–124 and 134–211; these read GKMF…FPKR and KKVF…KAQP. Required for binding to target mRNAs stretches follow at residues 88–93 and 177–182; these read FGFITF and FGFVTF.

Belongs to the Musashi family. Expressed in the gut and in AVA, AFD, RMD, RMED, RMEV, RMER and RMEL neurons (at protein level). In the tail expressed in neurons and all the ray sensilla. Expressed in male specific C1-C4 neurons.

The protein resides in the cytoplasm. It localises to the perikaryon. Functionally, RNA binding protein that regulates the expression of target mRNAs at the translation level. Binds RNA containing the 5'-[GA]U(1-3)AGU-3' motif located in the 3' UTR of the target mRNA. Binds to the mRNA of three Arp2/3 complex components arx-1, arx-2 and arx-3 and negatively regulates their translation during association learning. Plays a role in time-dependent memory loss and the retention of conditioned behavior over time, probably through negative regulation of the Arp2/3 actin cytoskeleton branching complex and regulation of synapse size. Required for two aspects of male mating behavior: turning around the hermaphrodite head or tail and vulva location. The sequence is that of RNA-binding protein Musashi homolog 1 from Caenorhabditis elegans.